A 962-amino-acid polypeptide reads, in one-letter code: Splicing regulator ARVCF (962 aa).

Residues 11–46 are a coiled coil; the sequence is SILASVKEQEARFERLTRALEQERRHVALQLERAQQ. The disordered stretch occupies residues 95-123; sequence VTVEEDPGTPTSHVSIVTSEDGTTRRTET. Phosphothreonine is present on residues threonine 103 and threonine 105. The span at 103–115 shows a compositional bias: polar residues; that stretch reads TPTSHVSIVTSED. Arginine 171 bears the Omega-N-methylarginine mark. 3 disordered regions span residues 233-255, 268-291, and 322-357; these read GRRE…LPEH, RSLA…TRRR, and AATA…EPRW. Position 269 is a phosphoserine (serine 269). Over residues 272–282 the composition is skewed to acidic residues; that stretch reads ADDEGGPDLEP. Serine 334, serine 337, serine 345, and serine 347 each carry phosphoserine. ARM repeat units lie at residues 350–389, 392–431, 435–469, 470–510, 528–567, and 577–623; these read STRK…HLCF, EGIK…NLSY, TDNK…VTGT, LWNL…NEDS, LRNV…DTDN, and MRNL…GKKA. Residues 593–618 are disordered; it reads RYQEAEPGIPGSTTSQRRRKDDASCF. A Phosphoserine modification is found at serine 607. Positions 608–624 match the Nuclear localization signal motif; it reads QRRRKDDASCFGGKKAK. A Phosphothreonine modification is found at threonine 643. ARM repeat units follow at residues 647–687, 700–739, 740–782, and 783–827; these read PKRT…AAGA, TYIR…NLSL, DQRN…AVLN, and TIHE…SHVL. A required for interaction with RNA-binding proteins DDX5, HNRNPH2 and SRSF1 and with mRNAs region spans residues 777-962; that stretch reads VVAVLNTIHE…TKPQPVDSWV (186 aa). The disordered stretch occupies residues 844-962; that stretch reads GWTKSRFQSA…TKPQPVDSWV (119 aa). Phosphoserine is present on residues serine 864 and serine 871. Threonine 872 carries the post-translational modification Phosphothreonine. 2 stretches are compositionally biased toward basic and acidic residues: residues 878–887 and 920–932; these read KSLDGEKSNT and TSEK…DPGR.

It belongs to the beta-catenin family. In terms of assembly, component of a ribonucleoprotein complex containing mRNAs and RNA-binding proteins including DDX5, HNRNPH2 and SRSF1 as well as ARVCF. Interacts (via the extreme C-terminus) with FRMPD2 (via the PDZ 2 domain). Interacts with CCDC85B.

The protein localises to the cell junction. It localises to the adherens junction. Its subcellular location is the nucleus. It is found in the cytoplasm. Contributes to the regulation of alternative splicing of pre-mRNAs. The chain is Splicing regulator ARVCF (Arvcf) from Mus musculus (Mouse).